The sequence spans 366 residues: NADP-dependent isopropanol dehydrogenase (366 aa).

The Zn(2+) site is built by Cys-43, His-65, Glu-66, and Asp-156. Residues 181–184, 204–206, Tyr-224, 271–273, and Lys-346 contribute to the NADP(+) site; these read IGPV, GSR, and VNY.

It belongs to the zinc-containing alcohol dehydrogenase family. Homodimer. Zn(2+) serves as cofactor.

It is found in the cytoplasm. The enzyme catalyses propan-2-ol + NADP(+) = acetone + NADPH + H(+). Functionally, alcohol dehydrogenase with a preference for medium chain secondary alcohols, such as 2-butanol and isopropanol. Has very low activity with primary alcohols, such as ethanol. Under physiological conditions, the enzyme reduces aldehydes and 2-ketones to produce secondary alcohols. Is also active with acetaldehyde and propionaldehyde. The protein is NADP-dependent isopropanol dehydrogenase of Entamoeba histolytica (strain ATCC 30459 / HM-1:IMSS / ABRM).